Reading from the N-terminus, the 166-residue chain is MSSEITEGDLQKFHDEHFNAKAVNLWNVAFAQNDRGGNSESANVEYTQSVERYPDGTIRTLTDEQILWFRESEKRELMWKKEKEQLLKEKELRQKALDKERMVSSKPETNPKTPISLKELKDIEIYQNQFHYSAYEILEEEKILDNIFRKFTALPIKYWPATPIRG.

Residues 1–58 form a may interact with smn1 region; sequence MSSEITEGDLQKFHDEHFNAKAVNLWNVAFAQNDRGGNSESANVEYTQSVERYPDGTI.

Part of the core SMN complex at least composed of smn1, yip11/gem2, gem6, gem7 and gem8. Interacts with smn1; the interaction is direct. Interacts with gem7; the interaction is direct.

It is found in the cytoplasm. The protein resides in the nucleus. The SMN complex catalyzes the assembly of small nuclear ribonucleoproteins (snRNPs), the building blocks of the spliceosome, and thereby plays an important role in the splicing of cellular pre-mRNAs. Most spliceosomal snRNPs contain a common set of Sm proteins SNRPB, SNRPD1, SNRPD2, SNRPD3, SNRPE, SNRPF and SNRPG that assemble in a heptameric protein ring on the Sm site of the small nuclear RNA to form the core snRNP (Sm core). In the cytosol, the Sm proteins SNRPD1, SNRPD2, SNRPE, SNRPF and SNRPG are trapped in an inactive 6S pICln-Sm complex by the chaperone CLNS1A that controls the assembly of the core snRNP. To assemble core snRNPs, the SMN complex accepts the trapped 5Sm proteins from CLNS1A forming an intermediate. Binding of snRNA inside 5Sm triggers eviction of the SMN complex, thereby allowing binding of SNRPD3 and SNRPB to complete assembly of the core snRNP. This is an uncharacterized protein from Schizosaccharomyces pombe (strain 972 / ATCC 24843) (Fission yeast).